A 46-amino-acid polypeptide reads, in one-letter code: uncharacterized protein (46 aa).

This is an uncharacterized protein from Saccharomyces cerevisiae (strain ATCC 204508 / S288c) (Baker's yeast).